A 337-amino-acid polypeptide reads, in one-letter code: Phosphate acyltransferase (337 aa).

Belongs to the PlsX family. Homodimer. Probably interacts with PlsY.

It is found in the cytoplasm. The catalysed reaction is a fatty acyl-[ACP] + phosphate = an acyl phosphate + holo-[ACP]. The protein operates within lipid metabolism; phospholipid metabolism. Functionally, catalyzes the reversible formation of acyl-phosphate (acyl-PO(4)) from acyl-[acyl-carrier-protein] (acyl-ACP). This enzyme utilizes acyl-ACP as fatty acyl donor, but not acyl-CoA. The sequence is that of Phosphate acyltransferase from Polynucleobacter necessarius subsp. necessarius (strain STIR1).